Consider the following 214-residue polypeptide: uncharacterized protein (214 aa).

Transmembrane regions (helical) follow at residues I19 to L39 and L50 to G70.

It is found in the cell membrane. This is an uncharacterized protein from Methanocaldococcus jannaschii (strain ATCC 43067 / DSM 2661 / JAL-1 / JCM 10045 / NBRC 100440) (Methanococcus jannaschii).